The chain runs to 98 residues: uncharacterized protein (98 aa).

A compositionally biased stretch (basic residues) spans 19–31 (RRMSKRSKNKAKK). Residues 19–47 (RRMSKRSKNKAKKERVPVEDRPPTPMPTS) form a disordered region.

It belongs to the lymphocryptovirus BNLF2b family.

This is an uncharacterized protein from Homo sapiens (Human).